Reading from the N-terminus, the 301-residue chain is MTIALTHLQRLEAESIHIFREVAAAFAKPVMLYSVGKDSSVLMHLAMKAFYPAKPPFPFLHVDTTWKFREMIAFRDQMAQKLGFDLLVHVNEDGVRDNINPFDHGSNTHTHVMKTVALRQALDKYGFDAAFGGARRDEEKSRAKERIFSFRNAQHVWDPKNQRPEMWKIFNTRIASGESIRVFPLSNWTELDIWQYILQENIPIVPLYFAKERPVVERDGMLILKDDDRMKLRPGETVENRLVRFRTLGCYPLTGAIESDADTLEAIVGEMLTARTSERQGRLIDRDEAGSMEKKKREGYF.

Residues 279 to 301 (RQGRLIDRDEAGSMEKKKREGYF) are disordered.

Belongs to the PAPS reductase family. CysD subfamily. Heterodimer composed of CysD, the smaller subunit, and CysN.

The catalysed reaction is sulfate + ATP + H(+) = adenosine 5'-phosphosulfate + diphosphate. It participates in sulfur metabolism; hydrogen sulfide biosynthesis; sulfite from sulfate: step 1/3. With CysN forms the ATP sulfurylase (ATPS) that catalyzes the adenylation of sulfate producing adenosine 5'-phosphosulfate (APS) and diphosphate, the first enzymatic step in sulfur assimilation pathway. APS synthesis involves the formation of a high-energy phosphoric-sulfuric acid anhydride bond driven by GTP hydrolysis by CysN coupled to ATP hydrolysis by CysD. The polypeptide is Sulfate adenylyltransferase subunit 2 (Mesorhizobium japonicum (strain LMG 29417 / CECT 9101 / MAFF 303099) (Mesorhizobium loti (strain MAFF 303099))).